The following is a 231-amino-acid chain: Eukaryotic translation initiation factor 4E-1 (231 aa).

Residues 1–55 (MVVEDTQKSSITDDQITANPNNENEDLEEGEILDDDDSSATSRPPSSSGALARNP) are disordered. Over residues 8–18 (KSSITDDQITA) the composition is skewed to polar residues. The segment covering 23–38 (ENEDLEEGEILDDDDS) has biased composition (acidic residues). The span at 39-48 (SATSRPPSSS) shows a compositional bias: low complexity. 2 EIF4G-binding regions span residues 56–59 (HPLE) and 66–102 (FDNP…NNIH). Residues 74-79 (KQAAWG), Lys106, and 124-125 (WE) contribute to the mRNA site. Cysteines 129 and 167 form a disulfide. An EIF4G-binding region spans residues 150-159 (YTLLGMIGEQ). MRNA is bound by residues 174-179 (RNRQEK) and 219-223 (KKHDR).

The protein belongs to the eukaryotic initiation factor 4E family. EIF4F is a multi-subunit complex, the composition of which varies with external and internal environmental conditions. It is composed of at least EIF4A, EIF4E and EIF4G. EIF4E is also known to interact with other partners. In higher plants two isoforms of EIF4F have been identified, named isoform EIF4F and isoform EIF(iso)4F. Isoform EIF4F has subunits p220 and p26, whereas isoform EIF(iso)4F has subunits p82 and p28. As to quaternary structure, (Microbial infection) Interacts with potyvirus peanut stripe virus (PStV) helper component proteinase (HC-Pro) in the cytoplasm and with PStV viral genome-linked protein (VPg) in the nucleus; these interactions are possible in susceptible hosts but impaired in resistant plants. Post-translationally, according to the redox status, the Cys-129-Cys-167 disulfide bridge may have a role in regulating protein function by affecting its ability to bind capped mRNA. As to expression, expressed ubiquitously with highest levels in young leaves and roots, and lowest levels in flowers.

Its subcellular location is the nucleus. The protein localises to the cytoplasm. Its function is as follows. Component of the protein complex eIF4F, which is involved in the recognition of the mRNA cap, ATP-dependent unwinding of 5'-terminal secondary structure and recruitment of mRNA to the ribosome. Recognizes and binds the 7-methylguanosine-containing mRNA cap during an early step in the initiation of protein synthesis and facilitates ribosome binding by inducing the unwinding of the mRNAs secondary structures. Key component of recessive resistance to potyviruses such as peanut stripe virus (PStV). In terms of biological role, (Microbial infection) Susceptibility host factor required for viral infection by recruiting viral RNAs to the host ribosomal complex via an interaction with viral genome-linked protein (VPg). The sequence is that of Eukaryotic translation initiation factor 4E-1 from Arachis hypogaea (Peanut).